The following is a 130-amino-acid chain: Methylglyoxal synthase (130 aa).

The 130-residue stretch at 1–130 folds into the MGS-like domain; that stretch reads MSKPRIALIA…DLARNMQDVC (130 aa). Residues His11, Lys15, 37–40, and 57–58 contribute to the substrate site; these read TGTT and SG. Asp63 functions as the Proton donor/acceptor in the catalytic mechanism. His90 provides a ligand contact to substrate.

The protein belongs to the methylglyoxal synthase family.

The enzyme catalyses dihydroxyacetone phosphate = methylglyoxal + phosphate. Its function is as follows. Catalyzes the formation of methylglyoxal from dihydroxyacetone phosphate. The protein is Methylglyoxal synthase of Burkholderia ambifaria (strain MC40-6).